We begin with the raw amino-acid sequence, 332 residues long: Glycerol-3-phosphate dehydrogenase [NAD(P)+] (332 aa).

Positions 10, 11, 31, 32, and 105 each coordinate NADPH. Sn-glycerol 3-phosphate-binding residues include K105, G136, and S138. A140 contributes to the NADPH binding site. Positions 191, 244, 254, 255, and 256 each coordinate sn-glycerol 3-phosphate. The active-site Proton acceptor is the K191. R255 serves as a coordination point for NADPH. The NADPH site is built by V279 and E281.

This sequence belongs to the NAD-dependent glycerol-3-phosphate dehydrogenase family.

The protein localises to the cytoplasm. It catalyses the reaction sn-glycerol 3-phosphate + NAD(+) = dihydroxyacetone phosphate + NADH + H(+). The enzyme catalyses sn-glycerol 3-phosphate + NADP(+) = dihydroxyacetone phosphate + NADPH + H(+). It functions in the pathway membrane lipid metabolism; glycerophospholipid metabolism. Its function is as follows. Catalyzes the reduction of the glycolytic intermediate dihydroxyacetone phosphate (DHAP) to sn-glycerol 3-phosphate (G3P), the key precursor for phospholipid synthesis. In Prosthecochloris aestuarii (strain DSM 271 / SK 413), this protein is Glycerol-3-phosphate dehydrogenase [NAD(P)+].